A 291-amino-acid chain; its full sequence is Phosphate import ATP-binding protein PstB (291 aa).

A compositionally biased stretch (basic and acidic residues) spans 1-17; that stretch reads MANTNVKEKELAKHTDQ. Residues 1 to 40 are disordered; that stretch reads MANTNVKEKELAKHTDQSQESISTVVSSNEVKHNKESDSN. Residues 18–29 are compositionally biased toward polar residues; sequence SQESISTVVSSN. The segment covering 30–40 has biased composition (basic and acidic residues); sequence EVKHNKESDSN. Residues 45-286 form the ABC transporter domain; sequence YSTQNLDLWY…PSDKQTEDYI (242 aa). An ATP-binding site is contributed by 77–84; sequence GPSGCGKS.

This sequence belongs to the ABC transporter superfamily. Phosphate importer (TC 3.A.1.7) family. As to quaternary structure, the complex is composed of two ATP-binding proteins (PstB), two transmembrane proteins (PstC and PstA) and a solute-binding protein (PstS).

It is found in the cell membrane. The enzyme catalyses phosphate(out) + ATP + H2O = ADP + 2 phosphate(in) + H(+). In terms of biological role, part of the ABC transporter complex PstSACB involved in phosphate import. Responsible for energy coupling to the transport system. In Staphylococcus haemolyticus (strain JCSC1435), this protein is Phosphate import ATP-binding protein PstB.